The chain runs to 97 residues: Sperm-associated acrosin inhibitor (97 aa).

A signal peptide spans 1–26 (MAFFSSRVRALFILVLVLPLCSETGF). In terms of domain architecture, Kazal-like spans 32–90 (TRKEPDCDVYRSHLFFCTREMDPICGTNGKSYANPCIFCSEKLGRNEKFDFGHWGHCRE). 3 cysteine pairs are disulfide-bonded: Cys38–Cys70, Cys48–Cys67, and Cys56–Cys88.

As to expression, seminal plasma.

Its subcellular location is the secreted. Inhibits acrosin. The polypeptide is Sperm-associated acrosin inhibitor (Sus scrofa (Pig)).